A 236-amino-acid chain; its full sequence is 2-C-methyl-D-erythritol 4-phosphate cytidylyltransferase (236 aa).

It belongs to the IspD/TarI cytidylyltransferase family. IspD subfamily. Homodimer.

The catalysed reaction is 2-C-methyl-D-erythritol 4-phosphate + CTP + H(+) = 4-CDP-2-C-methyl-D-erythritol + diphosphate. Its pathway is isoprenoid biosynthesis; isopentenyl diphosphate biosynthesis via DXP pathway; isopentenyl diphosphate from 1-deoxy-D-xylulose 5-phosphate: step 2/6. In terms of biological role, catalyzes the formation of 4-diphosphocytidyl-2-C-methyl-D-erythritol from CTP and 2-C-methyl-D-erythritol 4-phosphate (MEP). The protein is 2-C-methyl-D-erythritol 4-phosphate cytidylyltransferase of Cronobacter sakazakii (strain ATCC BAA-894) (Enterobacter sakazakii).